We begin with the raw amino-acid sequence, 368 residues long: Protein HGH1 homolog (368 aa).

The protein belongs to the HGH1 family.

The polypeptide is Protein HGH1 homolog (Drosophila pseudoobscura pseudoobscura (Fruit fly)).